Reading from the N-terminus, the 347-residue chain is Phenylalanine--tRNA ligase alpha subunit (347 aa).

Mg(2+) is bound at residue Glu-265.

Belongs to the class-II aminoacyl-tRNA synthetase family. Phe-tRNA synthetase alpha subunit type 1 subfamily. As to quaternary structure, tetramer of two alpha and two beta subunits. The cofactor is Mg(2+).

The protein resides in the cytoplasm. The catalysed reaction is tRNA(Phe) + L-phenylalanine + ATP = L-phenylalanyl-tRNA(Phe) + AMP + diphosphate + H(+). The chain is Phenylalanine--tRNA ligase alpha subunit from Mycolicibacterium vanbaalenii (strain DSM 7251 / JCM 13017 / BCRC 16820 / KCTC 9966 / NRRL B-24157 / PYR-1) (Mycobacterium vanbaalenii).